Reading from the N-terminus, the 432-residue chain is Serine/threonine-protein kinase CDG1 (432 aa).

Residues cysteine 4 and cysteine 6 are each lipidated (S-palmitoyl cysteine). The segment covering 15–24 (LKDKSHKRSI) has biased composition (basic residues). A disordered region spans residues 15–47 (LKDKSHKRSIRNQTSSSSAQPAGTAKEVDSSSS). A compositionally biased stretch (polar residues) spans 25–35 (RNQTSSSSAQP). A phosphoserine mark is found at serine 44 and serine 47. The region spanning 74-354 (FRNESLIGRG…SQVVECLKYI (281 aa)) is the Protein kinase domain. Residues 80–88 (IGRGGFGTV) and lysine 102 contribute to the ATP site. Phosphotyrosine is present on tyrosine 147. The active-site Proton acceptor is the aspartate 200. Phosphoserine is present on residues serine 204 and serine 234. Threonine 235 and threonine 240 each carry phosphothreonine. At tyrosine 248 the chain carries Phosphotyrosine.

The protein belongs to the protein kinase superfamily. Ser/Thr protein kinase family. In terms of assembly, interacts with BSU1, BSL1 and BRI1. Post-translationally, phosphorylated at Ser-44, Ser-47 and Ser-234 by BRI1. In terms of tissue distribution, expressed at high levels in the stamen and pollen grains. Expressed at a very low level in vegetative tissues.

The protein localises to the cell membrane. It catalyses the reaction L-seryl-[protein] + ATP = O-phospho-L-seryl-[protein] + ADP + H(+). It carries out the reaction L-threonyl-[protein] + ATP = O-phospho-L-threonyl-[protein] + ADP + H(+). Its activity is regulated as follows. Activated by phosphorylation at Ser-234. In terms of biological role, serine/threonine-protein kinase involved in the positive regulation of brassinosteroid (BR) signaling and plant growth. Mediates BR signal transduction from BRI1 receptor kinase to BSU1 phosphatase. After activation by phosphorylation at Ser-234 by BRI1, CDG1 phosphorylates BSU1 at 'Ser-764' in the phosphatase domain, increasing the ability of BSU1 to inactivate the negative regulator of BR signaling ASK7/BIN2 by dephosphorylation at 'Tyr-200'. The full kinase activity of CDG1 is required for its biological function. This chain is Serine/threonine-protein kinase CDG1, found in Arabidopsis thaliana (Mouse-ear cress).